The chain runs to 156 residues: MTMTLDAARGGEMVESPFLAQLVAVIRAEDSHGLWDDKTNSEILREFIVTAEERRSMPIIGDPDPELIWRMTKFYDAIGLLVEKRTGCMASQMQKMHHEGFGRVVLIAGKLVVVSKHLRDVHRFGFETWAKLAEAGEKLVESAVATINEFPEAARA.

The protein belongs to the UPF0460 family.

This is UPF0460 protein in nifX 3'region from Rhodobacter capsulatus (Rhodopseudomonas capsulata).